A 548-amino-acid chain; its full sequence is Probable 5-epi-aristolochene synthase 4 (548 aa).

Mg(2+) is bound by residues aspartate 301, aspartate 305, aspartate 444, threonine 448, and glutamate 452. Positions aspartate 301–aspartate 305 match the DDXXD motif motif.

This sequence belongs to the terpene synthase family. In terms of assembly, monomer. Requires Mg(2+) as cofactor.

It is found in the cytoplasm. It carries out the reaction (2E,6E)-farnesyl diphosphate = (+)-5-epi-aristolochene + diphosphate. It participates in secondary metabolite biosynthesis; terpenoid biosynthesis. Functionally, catalyzes the cyclization of trans,trans-farnesyl diphosphate (FPP) to the bicyclic intermediate 5-epi-aristolochene, initial step in the conversion of FPP to the sesquiterpenoid antifungal phytoalexin capsidiol. Produces germacrene A as an enzyme-bound intermediate that is not released by the enzyme, but is further cyclized to produce the bicyclic 5-epi-aristolochene. This is Probable 5-epi-aristolochene synthase 4 from Nicotiana attenuata (Coyote tobacco).